A 108-amino-acid polypeptide reads, in one-letter code: UPF0060 membrane protein Ent638_1931 (108 aa).

The next 4 helical transmembrane spans lie at 6–26 (LLFFATALCEIIGCFLPWLWL), 29–49 (GASVFLLLPAGIALALFVWLL), 61–81 (AAYGGVYVCTALLWLRVVDGV), and 85–105 (AYDWAGALVALCGMLIIVAGW).

This sequence belongs to the UPF0060 family.

The protein localises to the cell inner membrane. The sequence is that of UPF0060 membrane protein Ent638_1931 from Enterobacter sp. (strain 638).